The sequence spans 186 residues: Putative manganese efflux pump MntP (186 aa).

6 helical membrane-spanning segments follow: residues 1 to 21 (MSFL…FAVS), 41 to 61 (VFFG…GSAV), 71 to 91 (WIAF…ALYG), 105 to 125 (LLML…SFAF), 130 to 150 (ILEP…CGAV), and 165 to 185 (IIGG…HLLW).

Belongs to the MntP (TC 9.B.29) family.

The protein localises to the cell membrane. Its function is as follows. Probably functions as a manganese efflux pump. The protein is Putative manganese efflux pump MntP of Methanosarcina barkeri (strain Fusaro / DSM 804).